A 557-amino-acid polypeptide reads, in one-letter code: MDIENDIRNRRIIRNISNLLDDDILCDVIITIRDGEEIKAHKTILAAGSTYFKTMFTTPMIARDLVTRVNLQMFDKDAVKNIVQYLYNRHISSMNVIDVLKCADYLLIDDLVADCESYIKDYTNHDTCICMYHKLYEMIHIPIVKYIKRMLMSNIPTLITTDAFKKTVFEILFDIISTNDNVYLYREGYKVTILLKWLEHNYITEEQLLCILSCIDIQNLDKKSRLLLYSNKTINMYPSCIQFLIDNKQNRNIIPRQLCLVCHDTKYNVCNPCILVYNINTMEYSVISTIPNHIINYASAIVDNEIIIAGGYNFNNPSLNKVYKINIENKIHVELPPMIKNRCRFSLAVIDDTIYAIGGQNGTNVERTIECYTMGDDKWKLLPDMPIALSSYGMCVLDQYIYIIGGSTLYIDYTSVHAVNSIDMEEDTDTSNKVIRYDTVNNIWETLPNFWTGTIKPGVVSHEDDIYVVCDIKDEKNVKTCIFRYNTNTYNGWELVTTTESRLSALHTILHDNTIMMLHCYESYMLQDTFNVYTREWNHTCHQHSNSYIMHNILPIY.

One can recognise a BTB domain in the interval 26-95 (CDVIITIRDG…LYNRHISSMN (70 aa)). The BACK domain occupies 143–223 (IVKYIKRMLM…CIDIQNLDKK (81 aa)). 3 Kelch repeats span residues 305–352 (EIII…VIDD), 353–399 (TIYA…VLDQ), and 415–464 (SVHA…SHED).

Interacts (via BTB domain) with host CUL3.

The protein resides in the host cytoplasm. Its function is as follows. Probable substrate-specific adapter of CUL3-containing E3 ubiquitin-protein ligases which mediate the ubiquitination and subsequent proteasomal degradation of host target proteins. This is Kelch repeat and BTB domain-containing protein 2 (KBTB2) from Cowpox virus (strain Brighton Red) (CPV).